The following is a 51-amino-acid chain: Large ribosomal subunit protein eL39 (51 aa).

This sequence belongs to the eukaryotic ribosomal protein eL39 family.

The polypeptide is Large ribosomal subunit protein eL39 (rpl39e) (Pyrobaculum aerophilum (strain ATCC 51768 / DSM 7523 / JCM 9630 / CIP 104966 / NBRC 100827 / IM2)).